A 395-amino-acid chain; its full sequence is Dihydroorotate dehydrogenase (quinone), mitochondrial (395 aa).

The transit peptide at 1–10 directs the protein to the mitochondrion; not cleaved; the sequence is MAWRQLRKRA. Topologically, residues 1–10 are mitochondrial matrix; the sequence is MAWRQLRKRA. Residues 11–30 form a helical membrane-spanning segment; that stretch reads LDAAIILGGGGLLFTSYLTA. Topologically, residues 31–395 are mitochondrial intermembrane; that stretch reads TGDDHFYAEY…TDAIGVDHRR (365 aa). Residues 95–99 and Ser-119 contribute to the FMN site; that span reads AGFDK. Residue Lys-99 coordinates substrate. 144-148 contributes to the substrate binding site; sequence NRYGF. Residues Asn-180 and Asn-211 each contribute to the FMN site. 211 to 216 contacts substrate; that stretch reads NVSSPN. The active-site Nucleophile is Ser-214. 2 residues coordinate FMN: Lys-254 and Thr-282. 283 to 284 lines the substrate pocket; the sequence is NT. FMN contacts are provided by residues Gly-305, Gly-334, and 355–356; that span reads YT.

The protein belongs to the dihydroorotate dehydrogenase family. Type 2 subfamily. In terms of assembly, monomer. FMN is required as a cofactor. In terms of processing, the uncleaved transit peptide is required for mitochondrial targeting and proper membrane integration.

The protein resides in the mitochondrion inner membrane. The catalysed reaction is (S)-dihydroorotate + a quinone = orotate + a quinol. The protein operates within pyrimidine metabolism; UMP biosynthesis via de novo pathway; orotate from (S)-dihydroorotate (quinone route): step 1/1. Its function is as follows. Catalyzes the conversion of dihydroorotate to orotate with quinone as electron acceptor. Required for UMP biosynthesis via de novo pathway. In Mus musculus (Mouse), this protein is Dihydroorotate dehydrogenase (quinone), mitochondrial (Dhodh).